We begin with the raw amino-acid sequence, 342 residues long: 4-hydroxy-2-oxovalerate aldolase (342 aa).

In terms of domain architecture, Pyruvate carboxyltransferase spans 7 to 259 (ILVHDMSLRD…CTGVDLGRIQ (253 aa)). 15 to 16 (RD) contacts substrate. Asp-16 serves as a coordination point for Mn(2+). His-19 acts as the Proton acceptor in catalysis. The substrate site is built by Ser-169 and His-198. Positions 198 and 200 each coordinate Mn(2+). Tyr-289 is a substrate binding site.

Belongs to the 4-hydroxy-2-oxovalerate aldolase family.

The enzyme catalyses (S)-4-hydroxy-2-oxopentanoate = acetaldehyde + pyruvate. This chain is 4-hydroxy-2-oxovalerate aldolase, found in Alkalilimnicola ehrlichii (strain ATCC BAA-1101 / DSM 17681 / MLHE-1).